Consider the following 489-residue polypeptide: Cytochrome P450 302a1, mitochondrial (489 aa).

C434 lines the heme pocket.

This sequence belongs to the cytochrome P450 family. Heme is required as a cofactor. As to expression, complex coexpression pattern of dib (disembodied) and sad (shade) in the early embryo that restricts to the prothoracic gland cells of the developing ring gland during late embryogenesis. In larvae and adult, coexpression is seen in prothoracic gland and follicle cells of the ovary. In adults, coexpression is seen in the follicle cells.

It is found in the mitochondrion membrane. The enzyme catalyses 2,22-dideoxyecdysone + 2 reduced [adrenodoxin] + O2 + 2 H(+) = 2-deoxyecdysone + 2 oxidized [adrenodoxin] + H2O. It functions in the pathway steroid biosynthesis; ecdysteroid biosynthesis. Required for CNS development; negatively regulates glial cell division in the embryonic midline. Involved in the metabolism of insect hormones; responsible for ecdysteroid C22-hydroxylase activity. May be involved in the breakdown of synthetic insecticides. The polypeptide is Cytochrome P450 302a1, mitochondrial (Drosophila melanogaster (Fruit fly)).